Reading from the N-terminus, the 222-residue chain is Myosin regulatory light chain 2 (222 aa).

The segment at 1 to 65 (MADEKKKVKK…RGSRKSKRAG (65 aa)) is disordered. Alanine 2 carries the post-translational modification N-acetylalanine. Over residues 19 to 53 (TSETASEAASEAATPAPAATPAPAASATGSKRASG) the composition is skewed to low complexity. Residues serine 66 and serine 67 each carry the phosphoserine modification. EF-hand domains are found at residues 75 to 110 (KQIA…VGKI), 147 to 180 (DEDE…FGDK), and 181 to 216 (FTMK…KGEE). Ca(2+) is bound by residues aspartate 88, aspartate 90, aspartate 92, and aspartate 99.

Myosin is a hexamer of 2 heavy chains and 4 light chains.

The polypeptide is Myosin regulatory light chain 2 (Mlc2) (Drosophila melanogaster (Fruit fly)).